The following is a 269-amino-acid chain: Staphylococcal secretory antigen ssaA2 (269 aa).

Residues 1–27 (MKKIATATIATAGFATIAIASGNQAHA) form the signal peptide. 7 consecutive repeat copies span residues 83-85 (YNN), 88-90 (YNN), 91-93 (YNN), 97-99 (YNN), 103-105 (YNN), 106-108 (YSN), and 115-117 (YNN). Residues 83-115 (YNNYNYNNYNNGYSYNNYSRYNNYSNNNQSYNY) form a 7 X 3 AA repeats of Y-[NS]-N region. The region spanning 148-269 (MAPSSNGRSI…SQAAGYNFIH (122 aa)) is the Peptidase C51 domain.

The protein localises to the secreted. In terms of biological role, not known; immunogenic protein. The protein is Staphylococcal secretory antigen ssaA2 (ssaA2) of Staphylococcus aureus (strain MSSA476).